A 133-amino-acid chain; its full sequence is Agouti-signaling protein (133 aa).

The first 22 residues, 1–22, serve as a signal peptide directing secretion; the sequence is MDVSRLLLATLLVCLCFLTAYS. N-linked (GlcNAc...) asparagine glycosylation is present at N39. Positions 56-95 are disordered; it reads NKKSKKISRNEAEKKKRPSKRKAPMKNVARTRPPPPTPCV. The span at 70–79 shows a compositional bias: basic residues; that stretch reads KKRPSKRKAP. Intrachain disulfides connect C94–C109, C101–C115, C108–C126, C112–C133, and C117–C124. Residues 94–133 form the Agouti domain; it reads CVATRDSCKPPAPACCDPCAFCQCRFFRSACSCRVLNPTC.

It localises to the secreted. In terms of biological role, involved in the regulation of melanogenesis. The binding of ASP to MC1R precludes alpha-MSH initiated signaling and thus blocks production of cAMP, leading to a down-regulation of eumelanogenesis (brown/black pigment) and thus increasing synthesis of pheomelanin (yellow/red pigment). This is Agouti-signaling protein (ASIP) from Bos taurus (Bovine).